Consider the following 375-residue polypeptide: Aminomethyltransferase (375 aa).

This sequence belongs to the GcvT family. As to quaternary structure, the glycine cleavage system is composed of four proteins: P, T, L and H.

The catalysed reaction is N(6)-[(R)-S(8)-aminomethyldihydrolipoyl]-L-lysyl-[protein] + (6S)-5,6,7,8-tetrahydrofolate = N(6)-[(R)-dihydrolipoyl]-L-lysyl-[protein] + (6R)-5,10-methylene-5,6,7,8-tetrahydrofolate + NH4(+). The glycine cleavage system catalyzes the degradation of glycine. This is Aminomethyltransferase from Cupriavidus taiwanensis (strain DSM 17343 / BCRC 17206 / CCUG 44338 / CIP 107171 / LMG 19424 / R1) (Ralstonia taiwanensis (strain LMG 19424)).